A 332-amino-acid polypeptide reads, in one-letter code: L-lactate dehydrogenase A chain (332 aa).

Residues 29 to 57 (GAVGMACAISILMKDLADELALVDVVEDK) and R99 each bind NAD(+). Residues R106, N138, and R169 each coordinate substrate. N138 is an NAD(+) binding site. The active-site Proton acceptor is the H193. T248 contacts substrate.

Belongs to the LDH/MDH superfamily. LDH family. Homotetramer.

The protein localises to the cytoplasm. The enzyme catalyses (S)-lactate + NAD(+) = pyruvate + NADH + H(+). It participates in fermentation; pyruvate fermentation to lactate; (S)-lactate from pyruvate: step 1/1. Functionally, interconverts simultaneously and stereospecifically pyruvate and lactate with concomitant interconversion of NADH and NAD(+). The chain is L-lactate dehydrogenase A chain (LDHA) from Python regius (Ball python).